A 548-amino-acid polypeptide reads, in one-letter code: Glucose-6-phosphate isomerase 1 (548 aa).

Glu-353 (proton donor) is an active-site residue. Residues His-384 and Lys-495 contribute to the active site.

Belongs to the GPI family.

The protein localises to the cytoplasm. It carries out the reaction alpha-D-glucose 6-phosphate = beta-D-fructose 6-phosphate. The protein operates within carbohydrate biosynthesis; gluconeogenesis. It participates in carbohydrate degradation; glycolysis; D-glyceraldehyde 3-phosphate and glycerone phosphate from D-glucose: step 2/4. Its function is as follows. Catalyzes the reversible isomerization of glucose-6-phosphate to fructose-6-phosphate. In Chromohalobacter salexigens (strain ATCC BAA-138 / DSM 3043 / CIP 106854 / NCIMB 13768 / 1H11), this protein is Glucose-6-phosphate isomerase 1.